The sequence spans 603 residues: Mono(2-hydroxyethyl) terephthalate hydrolase (603 aa).

The signal sequence occupies residues 1–17 (MQTTVTTMLLASVALAA). Residue C18 is the site of N-palmitoyl cysteine attachment. C18 carries the S-diacylglycerol cysteine lipid modification. A disordered region spans residues 24–44 (TPLPLPQQQPPQQEPPPPPVP). Residues 26 to 44 (LPLPQQQPPQQEPPPPPVP) are compositionally biased toward pro residues. C51 and C92 are joined by a disulfide. G132 is a 4-[(2-hydroxyethoxy)carbonyl]benzoate binding site. Intrachain disulfides connect C224-C529, C303-C320, C340-C348, and C577-C599. Residue S225 is the Acyl-ester intermediate of the active site. E226 is a binding site for 4-[(2-hydroxyethoxy)carbonyl]benzoate. D304, D307, L309, D311, and I313 together coordinate Ca(2+). 4-[(2-hydroxyethoxy)carbonyl]benzoate is bound by residues R411 and S416. Active-site charge relay system residues include D492 and H528. H528 is a 4-[(2-hydroxyethoxy)carbonyl]benzoate binding site.

This sequence belongs to the tannase family.

Its subcellular location is the cell outer membrane. It carries out the reaction 4-[(2-hydroxyethoxy)carbonyl]benzoate + H2O = terephthalate + ethylene glycol + H(+). Its function is as follows. Involved in the degradation and assimilation of the plastic poly(ethylene terephthalate) (PET), which allows I.sakaiensis to use PET as its major energy and carbon source for growth. Likely acts synergistically with PETase to depolymerize PET. Catalyzes the hydrolysis of mono(2-hydroxyethyl) terephthalate (MHET) into its two environmentally benign monomers, terephthalate and ethylene glycol. Does not show activity against PET, bis(hydroxyethyl) terephthalate (BHET), pNP-aliphatic esters or typical aromatic ester compounds catalyzed by the tannase family enzymes, such as ethyl gallate and ethyl ferulate. This is Mono(2-hydroxyethyl) terephthalate hydrolase from Piscinibacter sakaiensis (Ideonella sakaiensis).